Consider the following 231-residue polypeptide: Chalcone--flavanone isomerase (231 aa).

3 residues coordinate substrate: Thr-46, Asn-112, and Ser-189.

Belongs to the chalcone isomerase family.

The enzyme catalyses a chalcone = a flavanone.. Its pathway is secondary metabolite biosynthesis; flavonoid biosynthesis. Catalyzes the intramolecular cyclization of bicyclic chalcones into tricyclic (S)-flavanones. Responsible for the isomerization of 4,2',4',6'-tetrahydroxychalcone (also termed chalcone) into naringenin. This is Chalcone--flavanone isomerase (CHI) from Hordeum vulgare (Barley).